The following is a 654-amino-acid chain: U-box domain-containing protein 12 (654 aa).

In terms of domain architecture, U-box spans 255-329 (IPPEEFRCPI…AQWCESNGIE (75 aa)). Positions 329–352 (EPPKRPNISQPSSKASSSSSAPDD) are disordered. Residues 337–349 (SQPSSKASSSSSA) are compositionally biased toward low complexity. 5 ARM repeats span residues 387–427 (NHNR…NLSI), 430–469 (ENKG…SLSV), 471–510 (DENK…NLCI), 512–551 (QGNK…ILSS), and 553–592 (PDGK…HLCS).

The catalysed reaction is S-ubiquitinyl-[E2 ubiquitin-conjugating enzyme]-L-cysteine + [acceptor protein]-L-lysine = [E2 ubiquitin-conjugating enzyme]-L-cysteine + N(6)-ubiquitinyl-[acceptor protein]-L-lysine.. Its pathway is protein modification; protein ubiquitination. Functions as an E3 ubiquitin ligase. The polypeptide is U-box domain-containing protein 12 (PUB12) (Arabidopsis thaliana (Mouse-ear cress)).